The sequence spans 861 residues: Benzylsuccinate synthase alpha subunit (861 aa).

In terms of domain architecture, PFL spans 40 to 712 (TERTRRLKAR…QAVGLYMEVG (673 aa)). The tract at residues 718–744 (TPDGRFGGEAADDGGISPYSGTDKKGP) is disordered. Positions 731 to 850 (GGISPYSGTD…IIARNEQNFN (120 aa)) constitute a Glycine radical domain. The residue at position 825 (glycine 825) is a Glycine radical.

It belongs to the glycyl radical enzyme (GRE) family. BSS subfamily. In terms of assembly, heterohexamer composed of 2 alpha subunits, 2 beta subunits and 2 gamma subunits.

The catalysed reaction is toluene + fumarate = 2-benzylsuccinate. It functions in the pathway xenobiotic degradation; toluene degradation. Its activity is regulated as follows. Activated by the benzylsuccinate synthase activating enzyme BssD. Rapidly inactivated by oxygen. In terms of biological role, catalyzes the addition of fumarate to the methyl group of toluene, leading to the formation of benzylsuccinate. The protein is Benzylsuccinate synthase alpha subunit (bssA) of Thauera aromatica.